Here is a 326-residue protein sequence, read N- to C-terminus: F-box/LRR-repeat protein 12 (326 aa).

In terms of domain architecture, F-box spans 1 to 47; the sequence is MATFADLPDSVLLEIFSYLPVRDRIRISRVCHHWKKLVDDRWLWRHV. LRR repeat units follow at residues 51–78, 86–111, 161–185, 186–211, 212–236, 237–261, and 266–291; these read LYTMRPKVMWHLLRRYMASRLHSLRMGG, APQLSPALMRALGQKCPNLKRLCLHV, VPAFRDEHLQGLTRFRALRSLVLGG, TYRVTETGLDMGLQELNYLQRLEVLG, CTLSADSTLLAISRHLRDVRKIRLT, VRGLSAPGLSVLEGMPALESLCLLG, and PEMPSPQEILASCLTMPKLRVLELQG.

In terms of assembly, interacts with SKP1 and CUL1.

It functions in the pathway protein modification; protein ubiquitination. Its function is as follows. Substrate-recognition component of the SCF (SKP1-CUL1-F-box protein)-type E3 ubiquitin ligase complex. Mediates the polyubiquitination and proteasomal degradation of CAMK1 leading to disruption of cyclin D1/CDK4 complex assembly which results in G1 cell cycle arrest in lung epithelia. In Bos taurus (Bovine), this protein is F-box/LRR-repeat protein 12 (FBXL12).